The chain runs to 142 residues: Large ribosomal subunit protein uL11 (142 aa).

The protein belongs to the universal ribosomal protein uL11 family. In terms of assembly, part of the ribosomal stalk of the 50S ribosomal subunit. Interacts with L10 and the large rRNA to form the base of the stalk. L10 forms an elongated spine to which L12 dimers bind in a sequential fashion forming a multimeric L10(L12)X complex. Post-translationally, one or more lysine residues are methylated.

Functionally, forms part of the ribosomal stalk which helps the ribosome interact with GTP-bound translation factors. This is Large ribosomal subunit protein uL11 from Shigella boydii serotype 4 (strain Sb227).